A 144-amino-acid chain; its full sequence is Hemoglobin subunit alpha-1 (144 aa).

Ser1 is modified (N-acetylserine). Residues 1 to 144 (SLTAKDKSVV…VSAALADKYR (144 aa)) form the Globin domain. His61 is an O2 binding site. His90 is a heme b binding site.

Belongs to the globin family. In terms of assembly, heterotetramer of two alpha chains and two beta chains. Red blood cells.

Functionally, involved in oxygen transport from gills to the various peripheral tissues. The polypeptide is Hemoglobin subunit alpha-1 (hba1) (Oncorhynchus mykiss (Rainbow trout)).